The primary structure comprises 167 residues: Translationally-controlled tumor protein homolog (167 aa).

The 167-residue stretch at 1-167 (MIIFKDVISN…WKHGIKEEKI (167 aa)) folds into the TCTP domain.

The protein belongs to the TCTP family.

It localises to the cytoplasm. Its subcellular location is the cytoskeleton. In terms of biological role, involved in protein synthesis. Involved in microtubule stabilization. The protein is Translationally-controlled tumor protein homolog of Yarrowia lipolytica (strain CLIB 122 / E 150) (Yeast).